A 274-amino-acid chain; its full sequence is 5'-nucleotidase SurE (274 aa).

Positions 12, 13, 45, and 103 each coordinate a divalent metal cation.

Belongs to the SurE nucleotidase family. The cofactor is a divalent metal cation.

The protein resides in the cytoplasm. The enzyme catalyses a ribonucleoside 5'-phosphate + H2O = a ribonucleoside + phosphate. Functionally, nucleotidase that shows phosphatase activity on nucleoside 5'-monophosphates. The chain is 5'-nucleotidase SurE from Chlamydia felis (strain Fe/C-56) (Chlamydophila felis).